The chain runs to 408 residues: MHLHPTRDFLRLLGERFSATRCPQVAGSLAFTTLLALVPLLTVAIGVFGNLPGMDKLGASLKDFLLENLLPDRAGRIITTYALQFSQKAARLTLIGTAMLAVTALMLLATIERVFNQIWGVRHRRPLLMRITVSWFMLTLGPVILGGSVVATGYLVSTSAEWSDRLPWIGEIAAATLPPLLLGALFSFLYYAVPNHPVRLLHALAGGLCAALVFLLMQRGLGLFIAGFPTYTLIYGTFAALPIFLLWLYLSWTVILLGALITATLPAFLERQRMLPAFPGDRAWAAVEMLAALAEAQYDGRPVGFAALRRRTNLAEHAAEALLESLRECGIASRTEGGDWVLTRAASDIRLSAVLQRFALDLTAWSALSPGRGGRIVAERLREGLQAADLSLAELAAANTSAGAVQVG.

A run of 7 helical transmembrane segments spans residues 29 to 49, 92 to 112, 131 to 151, 172 to 192, 197 to 217, 220 to 240, and 241 to 261; these read LAFTTLLALVPLLTVAIGVFG, LTLIGTAMLAVTALMLLATIE, ITVSWFMLTLGPVILGGSVVA, IAAATLPPLLLGALFSFLYYA, PVRLLHALAGGLCAALVFLLM, GLGLFIAGFPTYTLIYGTFAA, and LPIFLLWLYLSWTVILLGALI.

This sequence belongs to the UPF0761 family.

The protein resides in the cell inner membrane. This chain is UPF0761 membrane protein azo3165, found in Azoarcus sp. (strain BH72).